A 273-amino-acid chain; its full sequence is Shikimate dehydrogenase (NADP(+)) (273 aa).

Residues 14–16 and threonine 61 contribute to the shikimate site; that span reads SKS. The active-site Proton acceptor is the lysine 65. Residues asparagine 86 and aspartate 102 each contribute to the shikimate site. Residues 126 to 130, 150 to 155, and methionine 213 contribute to the NADP(+) site; these read GAGGA and NRTHAK. Residue tyrosine 215 coordinates shikimate. Glycine 237 lines the NADP(+) pocket.

This sequence belongs to the shikimate dehydrogenase family. In terms of assembly, homodimer.

It catalyses the reaction shikimate + NADP(+) = 3-dehydroshikimate + NADPH + H(+). Its pathway is metabolic intermediate biosynthesis; chorismate biosynthesis; chorismate from D-erythrose 4-phosphate and phosphoenolpyruvate: step 4/7. Involved in the biosynthesis of the chorismate, which leads to the biosynthesis of aromatic amino acids. Catalyzes the reversible NADPH linked reduction of 3-dehydroshikimate (DHSA) to yield shikimate (SA). The protein is Shikimate dehydrogenase (NADP(+)) of Aeromonas salmonicida (strain A449).